The primary structure comprises 872 residues: G-type lectin S-receptor-like serine/threonine-protein kinase At5g24080 (872 aa).

Positions 1–25 are cleaved as a signal peptide; sequence MSSFHFYFPSVGLFSFFCFFLVSLA. The Extracellular segment spans residues 26–472; it reads TEPHIGLGSK…SRKSHGLRQK (447 aa). A Bulb-type lectin domain is found at 30 to 149; that stretch reads IGLGSKLKAS…EVTAGPTIWQ (120 aa). Residues Asn49, Asn117, Asn208, Asn219, Asn261, and Asn294 are each glycosylated (N-linked (GlcNAc...) asparagine). In terms of domain architecture, EGF-like; atypical spans 306-344; it reads VSNPCDIAGICGNGVCNLDRTKKNADCLCLPGSVKLPDQ. 2 cysteine pairs are disulfide-bonded: Cys310-Cys321 and Cys316-Cys332. Asn353, Asn367, and Asn390 each carry an N-linked (GlcNAc...) asparagine glycan. In terms of domain architecture, PAN spans 360-447; that stretch reads CESNINRNGS…PGSTLFVKTR (88 aa). Disulfide bonds link Cys400-Cys424 and Cys404-Cys410. N-linked (GlcNAc...) asparagine glycans are attached at residues Asn449 and Asn459. A helical transmembrane segment spans residues 473–493; it reads VLVIPIVVGMLVLVALLGMLL. Over 494-872 the chain is Cytoplasmic; the sequence is YYNLDRKRTL…TCSYSSMSPR (379 aa). The residue at position 521 (Thr521) is a Phosphothreonine. The 281-residue stretch at 530-810 folds into the Protein kinase domain; sequence NNFSQLLGSG…LEGTSDEINL (281 aa). ATP-binding positions include 536-544 and Lys558; that span reads LGSGGFGTV. The residue at position 603 (Tyr603) is a Phosphotyrosine. The segment at 619-637 is caM-binding; sequence EQTANLLDWRTRFEIAVAT. Residue Asp656 is the Proton acceptor of the active site. A phosphothreonine mark is found at Thr690 and Thr695.

Belongs to the protein kinase superfamily. Ser/Thr protein kinase family.

It is found in the cell membrane. It catalyses the reaction L-seryl-[protein] + ATP = O-phospho-L-seryl-[protein] + ADP + H(+). The catalysed reaction is L-threonyl-[protein] + ATP = O-phospho-L-threonyl-[protein] + ADP + H(+). This chain is G-type lectin S-receptor-like serine/threonine-protein kinase At5g24080, found in Arabidopsis thaliana (Mouse-ear cress).